Here is a 297-residue protein sequence, read N- to C-terminus: GTPase Era (297 aa).

The region spanning 7 to 174 (HSGFVSIIGR…VQVVRDLLPE (168 aa)) is the Era-type G domain. The segment at 15–22 (GRPNVGKS) is G1. Residue 15-22 (GRPNVGKS) participates in GTP binding. The G2 stretch occupies residues 41–45 (QTTRN). Residues 62-65 (DTPG) form a G3 region. GTP is bound by residues 62 to 66 (DTPGI) and 124 to 127 (NKVD). The tract at residues 124 to 127 (NKVD) is G4. Positions 153-155 (VSA) are G5. A KH type-2 domain is found at 205 to 282 (THDEVPYSVA…FLELFVRVSR (78 aa)).

Belongs to the TRAFAC class TrmE-Era-EngA-EngB-Septin-like GTPase superfamily. Era GTPase family. As to quaternary structure, monomer.

The protein localises to the cytoplasm. Its subcellular location is the cell inner membrane. An essential GTPase that binds both GDP and GTP, with rapid nucleotide exchange. Plays a role in 16S rRNA processing and 30S ribosomal subunit biogenesis and possibly also in cell cycle regulation and energy metabolism. The protein is GTPase Era of Geotalea daltonii (strain DSM 22248 / JCM 15807 / FRC-32) (Geobacter daltonii).